The following is a 484-amino-acid chain: Glycogen synthase (484 aa).

An ADP-alpha-D-glucose-binding site is contributed by K15.

Belongs to the glycosyltransferase 1 family. Bacterial/plant glycogen synthase subfamily.

The catalysed reaction is [(1-&gt;4)-alpha-D-glucosyl](n) + ADP-alpha-D-glucose = [(1-&gt;4)-alpha-D-glucosyl](n+1) + ADP + H(+). Its pathway is glycan biosynthesis; glycogen biosynthesis. Its function is as follows. Synthesizes alpha-1,4-glucan chains using ADP-glucose. The polypeptide is Glycogen synthase (Syntrophotalea carbinolica (strain DSM 2380 / NBRC 103641 / GraBd1) (Pelobacter carbinolicus)).